Consider the following 317-residue polypeptide: Ribosomal protein L11 methyltransferase (317 aa).

Residues T158, G179, D201, and N244 each contribute to the S-adenosyl-L-methionine site.

The protein belongs to the methyltransferase superfamily. PrmA family.

Its subcellular location is the cytoplasm. It catalyses the reaction L-lysyl-[protein] + 3 S-adenosyl-L-methionine = N(6),N(6),N(6)-trimethyl-L-lysyl-[protein] + 3 S-adenosyl-L-homocysteine + 3 H(+). Methylates ribosomal protein L11. This chain is Ribosomal protein L11 methyltransferase, found in Streptococcus thermophilus (strain CNRZ 1066).